Consider the following 186-residue polypeptide: Ribosome-recycling factor (186 aa).

The protein belongs to the RRF family.

It localises to the cytoplasm. Functionally, responsible for the release of ribosomes from messenger RNA at the termination of protein biosynthesis. May increase the efficiency of translation by recycling ribosomes from one round of translation to another. The sequence is that of Ribosome-recycling factor from Burkholderia thailandensis (strain ATCC 700388 / DSM 13276 / CCUG 48851 / CIP 106301 / E264).